The chain runs to 434 residues: Tryptophan--tRNA ligase (434 aa).

Residues 14–16 (TTS) and 22–23 (GN) each bind ATP. The short motif at 15–23 (TSGTPHLGN) is the 'HIGH' region element. Asp147 serves as a coordination point for L-tryptophan. ATP-binding positions include 159 to 161 (GRD), Leu199, and 206 to 210 (KMSKS). A 'KMSKS' region motif is present at residues 206-210 (KMSKS).

Belongs to the class-I aminoacyl-tRNA synthetase family. In terms of assembly, homodimer.

The protein resides in the cytoplasm. It carries out the reaction tRNA(Trp) + L-tryptophan + ATP = L-tryptophyl-tRNA(Trp) + AMP + diphosphate + H(+). Catalyzes the attachment of tryptophan to tRNA(Trp). This is Tryptophan--tRNA ligase from Xylella fastidiosa (strain 9a5c).